The sequence spans 582 residues: Multicopper oxidase LPR1 homolog 1 (582 aa).

Residues 1–20 (MRAKVELAVLLLVLVGVAAG) form the signal peptide. Residues His150, His152, His198, and His200 each coordinate Cu cation. 3 N-linked (GlcNAc...) asparagine glycosylation sites follow: Asn256, Asn300, and Asn308. One can recognise a Plastocyanin-like domain in the interval 285 to 354 (PFLAVARRRY…DVVVDFSQST (70 aa)). Residues His467, His470, and His472 each coordinate Cu cation. N-linked (GlcNAc...) asparagine glycosylation occurs at Asn504. Cu cation is bound by residues His563, Cys564, His565, His569, and Met574.

The protein belongs to the multicopper oxidase family. Requires Cu cation as cofactor. Highly expressed in roots, and at lower levels in basal stems and leaf blades.

It is found in the endoplasmic reticulum membrane. Its function is as follows. Multicopper oxidase that may play a role in the maintenance of inorganic phosphate homeostasis. The protein is Multicopper oxidase LPR1 homolog 1 of Oryza sativa subsp. japonica (Rice).